We begin with the raw amino-acid sequence, 177 residues long: uncharacterized protein (177 aa).

Composition is skewed to low complexity over residues 78–93 (NNNNNNNNTINNNTNN) and 120–130 (SDVNSNNNNGN). The interval 78-146 (NNNNNNNNTI…NKKLKKDGTN (69 aa)) is disordered. Residues 131 to 146 (HQKKKINKKLKKDGTN) are compositionally biased toward basic residues.

This is an uncharacterized protein from Dictyostelium discoideum (Social amoeba).